Consider the following 121-residue polypeptide: Small ribosomal subunit protein uS13 (121 aa).

The segment at 88 to 121 (GMRHRRGLPVRGQHTKNNARTRKGKAVAIANKKK) is disordered.

This sequence belongs to the universal ribosomal protein uS13 family. In terms of assembly, part of the 30S ribosomal subunit. Forms a loose heterodimer with protein S19. Forms two bridges to the 50S subunit in the 70S ribosome.

In terms of biological role, located at the top of the head of the 30S subunit, it contacts several helices of the 16S rRNA. In the 70S ribosome it contacts the 23S rRNA (bridge B1a) and protein L5 of the 50S subunit (bridge B1b), connecting the 2 subunits; these bridges are implicated in subunit movement. Contacts the tRNAs in the A and P-sites. The sequence is that of Small ribosomal subunit protein uS13 from Limosilactobacillus reuteri subsp. reuteri (strain JCM 1112) (Lactobacillus reuteri).